A 92-amino-acid chain; its full sequence is Co-chaperonin GroES (92 aa).

The protein belongs to the GroES chaperonin family. As to quaternary structure, heptamer of 7 subunits arranged in a ring. Interacts with the chaperonin GroEL.

The protein localises to the cytoplasm. Functionally, together with the chaperonin GroEL, plays an essential role in assisting protein folding. The GroEL-GroES system forms a nano-cage that allows encapsulation of the non-native substrate proteins and provides a physical environment optimized to promote and accelerate protein folding. GroES binds to the apical surface of the GroEL ring, thereby capping the opening of the GroEL channel. This Thermotoga maritima (strain ATCC 43589 / DSM 3109 / JCM 10099 / NBRC 100826 / MSB8) protein is Co-chaperonin GroES.